An 88-amino-acid polypeptide reads, in one-letter code: Small ribosomal subunit protein uS12 (88 aa).

The disordered stretch occupies residues 1–24; the sequence is RKGRRDKIGKVKTAALKGSPQRRG. Asp-81 is subject to 3-methylthioaspartic acid.

It belongs to the universal ribosomal protein uS12 family. As to quaternary structure, part of the 30S ribosomal subunit. Contacts proteins S8 and S17. May interact with IF1 in the 30S initiation complex.

In terms of biological role, with S4 and S5 plays an important role in translational accuracy. Functionally, interacts with and stabilizes bases of the 16S rRNA that are involved in tRNA selection in the A site and with the mRNA backbone. Located at the interface of the 30S and 50S subunits, it traverses the body of the 30S subunit contacting proteins on the other side and probably holding the rRNA structure together. The combined cluster of proteins S8, S12 and S17 appears to hold together the shoulder and platform of the 30S subunit. This is Small ribosomal subunit protein uS12 (rpsL) from Mycobacterium szulgai.